The primary structure comprises 463 residues: Abscisic acid 8'-hydroxylase 3 (463 aa).

The helical transmembrane segment at 6–26 (LFLTLSAAALFLCLLRFIAGV) threads the bilayer. Residue C411 coordinates heme.

It belongs to the cytochrome P450 family. Heme is required as a cofactor. In terms of tissue distribution, mainly expressed in flower buds, flowers, rosette leaves and roots. Lower expression in mature siliques and inflorescence stems. Not expressed in dry seeds.

It is found in the membrane. It carries out the reaction 2-cis-(+)-abscisate + reduced [NADPH--hemoprotein reductase] + O2 = (+)-8'-hydroxyabscisate + oxidized [NADPH--hemoprotein reductase] + H2O + H(+). It functions in the pathway plant hormone degradation; abscisic acid degradation. Inhibited by tetcyclcis, but not by metyrapone. Functionally, involved in the oxidative degradation of abscisic acid, but not in the isomerization of the produced 8'-hydroxyabscisic acid (8'-OH-ABA) to (-)-phaseic acid (PA). Involved in the control of postgermination growth. The polypeptide is Abscisic acid 8'-hydroxylase 3 (CYP707A3) (Arabidopsis thaliana (Mouse-ear cress)).